The chain runs to 290 residues: UPF0761 membrane protein YihY (290 aa).

6 helical membrane-spanning segments follow: residues 44–64 (LLSLVPLVAVVFALFAAFPMF), 104–124 (VGACGLIVTALLLMYSIDSAL), 140–160 (FAVYWMILTLGPLLAGASLAI), 183–203 (IFPLLLSWISFWLLYSIVPTI), 210–230 (AIVGAFVAALLFEAGKKGFAL), and 244–264 (VLAVIPILFVWVYWTWCIVLL).

This sequence belongs to the UPF0761 family.

Its subcellular location is the cell inner membrane. In Escherichia coli O127:H6 (strain E2348/69 / EPEC), this protein is UPF0761 membrane protein YihY.